A 49-amino-acid polypeptide reads, in one-letter code: Chitin-binding lectin (49 aa).

Residues 2–45 form the Chitin-binding type-1 domain; that stretch reads DHRCGREATPPGKLCNDGRCCSQWGWCGTTQAYCSGKCQSQCDC. 4 disulfide bridges follow: Cys-5-Cys-22, Cys-16-Cys-28, Cys-21-Cys-35, and Cys-39-Cys-43.

In terms of assembly, homodimer; disulfide-linked.

Chitin-binding lectin which is specific for N-acetylglucosamine oligomers. The protein is Chitin-binding lectin of Viscum album (European mistletoe).